Reading from the N-terminus, the 97-residue chain is YcgL domain-containing protein CPS_3517 (97 aa).

Positions 1 to 85 (MLCAIYKSAR…PQEDLLKEHK (85 aa)) constitute a YcgL domain.

This chain is YcgL domain-containing protein CPS_3517, found in Colwellia psychrerythraea (strain 34H / ATCC BAA-681) (Vibrio psychroerythus).